The sequence spans 431 residues: 5-methylthioadenosine/S-adenosylhomocysteine deaminase (431 aa).

His-60 and His-62 together coordinate Zn(2+). Substrate-binding residues include Glu-89 and His-182. His-209 provides a ligand contact to Zn(2+). 2 residues coordinate substrate: Glu-212 and Asp-297. Position 297 (Asp-297) interacts with Zn(2+).

Belongs to the metallo-dependent hydrolases superfamily. MTA/SAH deaminase family. The cofactor is Zn(2+).

The enzyme catalyses S-adenosyl-L-homocysteine + H2O + H(+) = S-inosyl-L-homocysteine + NH4(+). It carries out the reaction S-methyl-5'-thioadenosine + H2O + H(+) = S-methyl-5'-thioinosine + NH4(+). Functionally, catalyzes the deamination of 5-methylthioadenosine and S-adenosyl-L-homocysteine into 5-methylthioinosine and S-inosyl-L-homocysteine, respectively. Is also able to deaminate adenosine. This chain is 5-methylthioadenosine/S-adenosylhomocysteine deaminase, found in Natronomonas pharaonis (strain ATCC 35678 / DSM 2160 / CIP 103997 / JCM 8858 / NBRC 14720 / NCIMB 2260 / Gabara) (Halobacterium pharaonis).